Here is a 485-residue protein sequence, read N- to C-terminus: Amidophosphoribosyltransferase, chloroplastic (485 aa).

The transit peptide at 1–18 directs the protein to the chloroplast; it reads KTTNTFASVNDDEKPREE. The active-site Nucleophile is the Cys19. Positions 19–237 constitute a Glutamine amidotransferase type-2 domain; it reads CGVVGIYGDP…PGEVVVVDHT (219 aa). Residue Cys253 participates in [4Fe-4S] cluster binding. Residues Ser300, Asp362, and Asp363 each coordinate Mg(2+). Residues Cys399, Cys450, and Cys453 each contribute to the [4Fe-4S] cluster site.

In the C-terminal section; belongs to the purine/pyrimidine phosphoribosyltransferase family. Requires Mg(2+) as cofactor. It depends on [4Fe-4S] cluster as a cofactor.

It is found in the plastid. The protein resides in the chloroplast. It catalyses the reaction 5-phospho-beta-D-ribosylamine + L-glutamate + diphosphate = 5-phospho-alpha-D-ribose 1-diphosphate + L-glutamine + H2O. Its pathway is purine metabolism; IMP biosynthesis via de novo pathway; N(1)-(5-phospho-D-ribosyl)glycinamide from 5-phospho-alpha-D-ribose 1-diphosphate: step 1/2. The polypeptide is Amidophosphoribosyltransferase, chloroplastic (PUR1) (Vigna aconitifolia (Moth bean)).